The following is a 444-amino-acid chain: Tubulin beta chain (444 aa).

The GTP site is built by Q11, E69, S138, G142, T143, G144, N204, and N226. E69 lines the Mg(2+) pocket. Residues 423 to 444 are disordered; that stretch reads QQYQDATAEEEGEFDDEEEMDV. A compositionally biased stretch (acidic residues) spans 429-444; the sequence is TAEEEGEFDDEEEMDV.

This sequence belongs to the tubulin family. Dimer of alpha and beta chains. A typical microtubule is a hollow water-filled tube with an outer diameter of 25 nm and an inner diameter of 15 nM. Alpha-beta heterodimers associate head-to-tail to form protofilaments running lengthwise along the microtubule wall with the beta-tubulin subunit facing the microtubule plus end conferring a structural polarity. Microtubules usually have 13 protofilaments but different protofilament numbers can be found in some organisms and specialized cells. Mg(2+) serves as cofactor.

The protein resides in the cytoplasm. It is found in the cytoskeleton. Functionally, tubulin is the major constituent of microtubules, a cylinder consisting of laterally associated linear protofilaments composed of alpha- and beta-tubulin heterodimers. Microtubules grow by the addition of GTP-tubulin dimers to the microtubule end, where a stabilizing cap forms. Below the cap, tubulin dimers are in GDP-bound state, owing to GTPase activity of alpha-tubulin. This chain is Tubulin beta chain, found in Euplotes focardii.